The chain runs to 434 residues: Serine hydroxymethyltransferase (434 aa).

Residues Leu132 and 136–138 contribute to the (6S)-5,6,7,8-tetrahydrofolate site; that span reads GHL. Lys241 is modified (N6-(pyridoxal phosphate)lysine).

It belongs to the SHMT family. In terms of assembly, homodimer. The cofactor is pyridoxal 5'-phosphate.

Its subcellular location is the cytoplasm. It carries out the reaction (6R)-5,10-methylene-5,6,7,8-tetrahydrofolate + glycine + H2O = (6S)-5,6,7,8-tetrahydrofolate + L-serine. Its pathway is one-carbon metabolism; tetrahydrofolate interconversion. The protein operates within amino-acid biosynthesis; glycine biosynthesis; glycine from L-serine: step 1/1. Catalyzes the reversible interconversion of serine and glycine with tetrahydrofolate (THF) serving as the one-carbon carrier. This reaction serves as the major source of one-carbon groups required for the biosynthesis of purines, thymidylate, methionine, and other important biomolecules. Also exhibits THF-independent aldolase activity toward beta-hydroxyamino acids, producing glycine and aldehydes, via a retro-aldol mechanism. This is Serine hydroxymethyltransferase from Nitrobacter hamburgensis (strain DSM 10229 / NCIMB 13809 / X14).